Here is a 73-residue protein sequence, read N- to C-terminus: Gas vesicle protein M2 (73 aa).

Belongs to the gas vesicle GvpA family. In terms of assembly, gvpF to GvpM interact with each other in vitro, and may form multi-subunit complex(es). Might interact with GvpA.

It localises to the gas vesicle. Proteins GvpF to GvpM might be involved in nucleating gas vesicle formation. A minor component of the gas vesicle. Gas vesicles are hollow, gas filled proteinaceous nanostructures found in several microbial planktonic microorganisms. They allow positioning of halobacteria at the optimal depth for growth in the poorly aerated, shallow brine pools of their habitat. Its function is as follows. Expression of 2 c-vac DNA fragments containing 2 divergently transcribed regions (gvpE-gvpF-gvpG-gvpH-gvpI-gvpJ-gvpK-gvpL-gvpM and gvpA-gvpC-gvpN-gvpO) allows H.volcanii to produce gas vesicles. The sequence is that of Gas vesicle protein M2 from Halobacterium salinarum (strain ATCC 700922 / JCM 11081 / NRC-1) (Halobacterium halobium).